The following is a 355-amino-acid chain: Small ribosomal subunit protein uS2 (355 aa).

It belongs to the universal ribosomal protein uS2 family.

This Methylobacterium radiotolerans (strain ATCC 27329 / DSM 1819 / JCM 2831 / NBRC 15690 / NCIMB 10815 / 0-1) protein is Small ribosomal subunit protein uS2.